The primary structure comprises 81 residues: Translational regulator CsrA (81 aa).

Belongs to the CsrA/RsmA family. As to quaternary structure, homodimer; the beta-strands of each monomer intercalate to form a hydrophobic core, while the alpha-helices form wings that extend away from the core.

The protein localises to the cytoplasm. In terms of biological role, a translational regulator that binds mRNA to regulate translation initiation and/or mRNA stability. Usually binds in the 5'-UTR at or near the Shine-Dalgarno sequence preventing ribosome-binding, thus repressing translation. Its main target seems to be the major flagellin gene, while its function is anatagonized by FliW. The polypeptide is Translational regulator CsrA (Desulforapulum autotrophicum (strain ATCC 43914 / DSM 3382 / VKM B-1955 / HRM2) (Desulfobacterium autotrophicum)).